The sequence spans 504 residues: Probable cytochrome P450 513F1 (504 aa).

A helical transmembrane segment spans residues 1–21 (MILSLLFLFVITLYFLIPSRI). Cys-449 lines the heme pocket.

This sequence belongs to the cytochrome P450 family. Heme serves as cofactor.

It is found in the membrane. The protein is Probable cytochrome P450 513F1 (cyp513F1) of Dictyostelium discoideum (Social amoeba).